The primary structure comprises 139 residues: Plastocyanin (139 aa).

Residues 1-34 (MKLIAQISRSLSLALFALVLMVGSFVAVMSPAAA) form the signal peptide. Residues 35 to 139 (ETFTVKMGAD…GMVGKITVEG (105 aa)) enclose the Plastocyanin-like domain. Residues His73, Cys123, His126, and Met131 each coordinate Cu cation.

It belongs to the plastocyanin family. The cofactor is Cu(2+).

It localises to the cellular thylakoid membrane. In terms of biological role, participates in electron transfer between P700 and the cytochrome b6-f complex in photosystem I. This chain is Plastocyanin (petE), found in Leptolyngbya laminosa (Phormidium laminosum).